A 467-amino-acid chain; its full sequence is Chromosomal replication initiator protein DnaA (467 aa).

A domain I, interacts with DnaA modulators region spans residues 1 to 90; that stretch reads MSLSLWQQCL…KPVTQTPQAA (90 aa). Residues 91–130 form a domain II region; that stretch reads VTSNVAAPAQVAQTQPQRAAPSTRSGWDNVPAPAEPTYRS. A compositionally biased stretch (low complexity) spans 98–111; that stretch reads PAQVAQTQPQRAAP. A disordered region spans residues 98–119; the sequence is PAQVAQTQPQRAAPSTRSGWDN. The interval 131-347 is domain III, AAA+ region; sequence NVNVKHTFDN…GALNRVIANA (217 aa). Positions 175, 177, 178, and 179 each coordinate ATP. The segment at 348-467 is domain IV, binds dsDNA; that stretch reads NFTGRAITID…FSNLIRTLSS (120 aa).

It belongs to the DnaA family. Oligomerizes as a right-handed, spiral filament on DNA at oriC.

It is found in the cytoplasm. Its function is as follows. Plays an essential role in the initiation and regulation of chromosomal replication. ATP-DnaA binds to the origin of replication (oriC) to initiate formation of the DNA replication initiation complex once per cell cycle. Binds the DnaA box (a 9 base pair repeat at the origin) and separates the double-stranded (ds)DNA. Forms a right-handed helical filament on oriC DNA; dsDNA binds to the exterior of the filament while single-stranded (ss)DNA is stabiized in the filament's interior. The ATP-DnaA-oriC complex binds and stabilizes one strand of the AT-rich DNA unwinding element (DUE), permitting loading of DNA polymerase. After initiation quickly degrades to an ADP-DnaA complex that is not apt for DNA replication. Binds acidic phospholipids. The chain is Chromosomal replication initiator protein DnaA from Shigella boydii serotype 4 (strain Sb227).